Consider the following 711-residue polypeptide: DNA topoisomerase 3 (711 aa).

The 134-residue stretch at 2-135 folds into the Toprim domain; that stretch reads KSLILAEKPS…LRRLWISSVT (134 aa). The Mg(2+) site is built by glutamate 8 and aspartate 104. Residues 152–580 enclose the Topo IA-type catalytic domain; it reads YNDLYYAALA…EMKDFTKDVV (429 aa). The interval 186–191 is interaction with DNA; sequence SLGRVQ. Tyrosine 305 serves as the catalytic O-(5'-phospho-DNA)-tyrosine intermediate. A disordered region spans residues 691 to 711; sequence MNKNEGLDNNPFKDALKNLNL.

The protein belongs to the type IA topoisomerase family. Mg(2+) is required as a cofactor.

It carries out the reaction ATP-independent breakage of single-stranded DNA, followed by passage and rejoining.. In terms of biological role, releases the supercoiling and torsional tension of DNA, which is introduced during the DNA replication and transcription, by transiently cleaving and rejoining one strand of the DNA duplex. Introduces a single-strand break via transesterification at a target site in duplex DNA. The scissile phosphodiester is attacked by the catalytic tyrosine of the enzyme, resulting in the formation of a DNA-(5'-phosphotyrosyl)-enzyme intermediate and the expulsion of a 3'-OH DNA strand. The free DNA strand then undergoes passage around the unbroken strand, thus removing DNA supercoils. Finally, in the religation step, the DNA 3'-OH attacks the covalent intermediate to expel the active-site tyrosine and restore the DNA phosphodiester backbone. The sequence is that of DNA topoisomerase 3 from Staphylococcus aureus (strain MRSA252).